We begin with the raw amino-acid sequence, 246 residues long: 33kDa venom protein (246 aa).

A signal peptide spans Met-1 to Pro-20. Repeat copies occupy residues Gly-83–Thr-96, Ala-97–Ser-110, Ala-111–Ser-124, Val-125–Ala-138, Val-139–Thr-152, Ala-153–Ser-166, and Ala-167–Thr-180. A 12 X approximate tandem repeats of [AV][DE]X[VL]SGSX[DE]QX[KR]X[ST] region spans residues Gly-83–Ile-243. The segment at Glu-88–Gln-246 is disordered. Positions Glu-112–Ser-123 are enriched in polar residues. Residues Asp-175–Glu-186 are compositionally biased toward basic and acidic residues. One copy of the 8; half-length repeat lies at Val-181–Pro-187. 4 tandem repeats follow at residues Ala-188–Thr-201, Thr-202–Ser-215, Ala-216–Ser-229, and Val-230–Ile-243. Positions Glu-217–Ser-228 are enriched in polar residues.

In terms of tissue distribution, expressed by the venom gland.

It localises to the secreted. This is 33kDa venom protein from Chelonus sp. nr. curvimaculatus (Parasitic wasp).